The following is a 410-amino-acid chain: Multidrug transporter MdfA (410 aa).

The Cytoplasmic portion of the chain corresponds to 1 to 15 (MQNKLASGARLGRQA). The chain crosses the membrane as a helical span at residues 16-36 (LLFPLCLVLYEFSTYIGNDMI). The Periplasmic portion of the chain corresponds to 37-52 (QPGMLAVVEQYQAGID). A helical membrane pass occupies residues 53–73 (WVPTSMTAYLAGGMFLQWLLG). At 74-82 (PLSDRIGRR) the chain is on the cytoplasmic side. A helical transmembrane segment spans residues 83 to 103 (PVMLAGVVWFIVTCLAILLAQ). At 104 to 109 (NIEQFT) the chain is on the periplasmic side. A helical membrane pass occupies residues 110 to 130 (LLRFLQGISLCFIGAVGYAAI). Topologically, residues 131 to 144 (QESFEEAVCIKITA) are cytoplasmic. A helical membrane pass occupies residues 145 to 165 (LMANVALIAPLLGPLVGAAWI). Position 166 (His-166) is a topological domain, periplasmic. Residues 167–187 (VLPWEGMFVLFAALAAISFFG) form a helical membrane-spanning segment. Over 188-226 (LQRAMPETATRIGEKLSLKELGRDYKLVLKNGRFVAGAL) the chain is Cytoplasmic. A helical transmembrane segment spans residues 227-247 (ALGFVSLPLLAWIAQSPIIII). Topologically, residues 248-255 (TGEQLSSY) are periplasmic. A helical transmembrane segment spans residues 256–276 (EYGLLQVPIFGALIAGNLLLA). The Cytoplasmic segment spans residues 277–287 (RLTSRRTVRSL). A helical transmembrane segment spans residues 288–308 (IIMGGWPIMIGLLVAAAATVI). Residues 309 to 314 (SSHAYL) lie on the Periplasmic side of the membrane. Residues 315–335 (WMTAGLSIYAFGIGLANAGLV) form a helical membrane-spanning segment. At 336-346 (RLTLFASDMSK) the chain is on the cytoplasmic side. Residues 347–367 (GTVSAAMGMLQMLIFTVGIEI) form a helical membrane-spanning segment. The Periplasmic portion of the chain corresponds to 368 to 378 (SKHAWLNGGNG). A helical membrane pass occupies residues 379 to 399 (LFNLFNLVNGILWLSLMVIFL). Over 400–410 (KDKQMGNSHEG) the chain is Cytoplasmic.

It belongs to the major facilitator superfamily. MdfA family. In terms of assembly, monomer.

The protein localises to the cell inner membrane. In terms of biological role, efflux pump driven by the proton motive force. Confers resistance to a broad spectrum of chemically unrelated drugs. This chain is Multidrug transporter MdfA (mdfA), found in Escherichia coli O6:H1 (strain CFT073 / ATCC 700928 / UPEC).